The chain runs to 799 residues: MAGWIQAQQLQGDALRQMQVLYGQHFPIEVRHYLAQWIESQPWDAIDVDNPQDRAQATQLLENLVQELQKKAEHQVGEDGFLLKIKLGHYATQLQNTYDRCPMELVRCIRHILYNEQRLVREANNGSSSAGILVDAMSQKHLQINQTFEELRLVTQDTENELKKLQQTQEYFIIQYQESLRIQAQFAQLAQLNPQECLSRETALQQKQVTLEAWLQREAQTLQQYRVELAEKHQKTLQLLRKQQTIILDDELIQWKRRQQLAGNGGPPEGSLDVLQSWCEKLAEIIWQNRQQIRRAEHLCQQLPIPGPVEEMLAEVNATITDIISALVTSTFIIEKQPPQVLKTQTKFAATVRLLVGGKLNVHMNPPQVKATIISEQQAKSLLKNESTRNECSGEILNNCCVMEYHQATGTLSAHFRNMSLKRIKRADRRGAESVTEEKFTVLFESQFSVGSNELVFQVKTLSLPVVVIVHGSQDHNATATVLWDNAFAEPGRVPFAVPDKVLWPQLCEALNMKFKAEVQSNRGLTKENLVFLAQKLFNSSSSHLEDYSGMSVSWSQFNRENLPGWNYTFWQWFDGVMEVLKKHHKPHWNDGAILGFVNKQQAHDLLINKPDGTFLLRFSDSEIGGITIAWKFDSPDRNLWNLKPFTTRDFSIRSLADRLGDLSYLIYVFPDRPKDEVFSKYYTPVLAPASAAKAVDGYVKPQIKQVVPEFVSASSDSAGGNATYMDQAPSPAVCPQAHYSIYPQNPDPVLDQDGEFDLDETMDVARHVEELLRRPMDSLDPRLSPPAGLFASTRGSLS.

Tyr-90 bears the Phosphotyrosine mark. At Ser-128 the chain carries Phosphoserine. An SH2 domain is found at 589–686 (WNDGAILGFV…EVFSKYYTPV (98 aa)). Residue Tyr-682 is modified to Phosphotyrosine. Position 699 is a phosphotyrosine; by JAK2 (Tyr-699). Positions 778–799 (DSLDPRLSPPAGLFASTRGSLS) are disordered. Ser-785 is subject to Phosphoserine.

It belongs to the transcription factor STAT family. As to quaternary structure, forms a homodimer or a heterodimer with a related family member. Binds NR3C1. Interacts with NCOA1 and SOCS7. Interacts with ERBB4. Interacts with EBF4. Interacts with CD69. ISGylated. In terms of processing, tyrosine phosphorylated in response to KITLG/SCF, IL2, IL3, IL7, IL15, CSF2/GMCSF, GH1, PRL, EPO and THPO. Activated KIT promotes phosphorylation on tyrosine residues and subsequent translocation to the nucleus. Tyrosine phosphorylated in response to constitutively activated FGFR1, FGFR2, FGFR3 and FGFR4. Tyrosine phosphorylation is required for DNA-binding activity and dimerization. Serine phosphorylation is also required for maximal transcriptional activity. Tyrosine phosphorylated in response to signaling via activated FLT3; wild-type FLT3 results in much weaker phosphorylation than constitutively activated mutant FLT3. Alternatively, can be phosphorylated by JAK2 at Tyr-699.

The protein resides in the cytoplasm. The protein localises to the nucleus. Functionally, carries out a dual function: signal transduction and activation of transcription. Mediates cellular responses to the cytokine KITLG/SCF and other growth factors. May mediate cellular responses to activated FGFR1, FGFR2, FGFR3 and FGFR4. Binds to the GAS element and activates PRL-induced transcription. Regulates the expression of milk proteins during lactation. This Sus scrofa (Pig) protein is Signal transducer and activator of transcription 5A (STAT5A).